A 286-amino-acid polypeptide reads, in one-letter code: uncharacterized protein (286 aa).

In terms of domain architecture, AB hydrolase-1 spans 26-268 (PLIILCHGFC…DACHYDIYEG (243 aa)).

The protein belongs to the AB hydrolase superfamily.

This is an uncharacterized protein from Escherichia coli.